The following is a 623-amino-acid chain: uncharacterized protein (623 aa).

5 helical membrane-spanning segments follow: residues 242–262, 288–308, 318–338, 361–381, and 387–407; these read IALA…ITWL, IVSP…LDIF, VSMW…IALF, VINL…LLGV, and FNVS…ALAV.

It belongs to the MscS (TC 1.A.23) family.

It is found in the cell membrane. This is an uncharacterized protein from Helicobacter pylori (strain J99 / ATCC 700824) (Campylobacter pylori J99).